We begin with the raw amino-acid sequence, 199 residues long: Peroxisomal membrane protein PEX17 (199 aa).

The protein localises to the peroxisome membrane. Its function is as follows. Component of the peroxisomal translocation machinery with PEX13 and PEX14. Interacts indirectly with the PTS1 receptor (PAS10/PEX5) and directly binds to PEX14. Required for import of both PTS1 and PTS2 proteins. The protein is Peroxisomal membrane protein PEX17 (PEX17) of Saccharomyces cerevisiae (strain ATCC 204508 / S288c) (Baker's yeast).